The sequence spans 323 residues: V-type ATP synthase subunit C (323 aa).

The protein belongs to the V-ATPase V0D/AC39 subunit family.

Produces ATP from ADP in the presence of a proton gradient across the membrane. This chain is V-type ATP synthase subunit C (atpC), found in Thermus thermophilus (strain ATCC 27634 / DSM 579 / HB8).